The following is a 761-amino-acid chain: RNA-binding protein mde7 (761 aa).

Composition is skewed to polar residues over residues 31–46 (PNHSSLSEQQSTNSLL), 58–83 (SRNSTTNPLNLLYTQTQQPARSTTPF), and 99–110 (SRNNSYLQGTAE). Disordered stretches follow at residues 31–110 (PNHS…GTAE) and 188–213 (HYFDDTDKSVHSKSSSGSNSLSEASN). Positions 188–197 (HYFDDTDKSV) are enriched in basic and acidic residues. The segment covering 199–211 (SKSSSGSNSLSEA) has biased composition (low complexity). Residues 223–289 (IVGGLPDDFD…SSTNNFTIIQ (67 aa)) form the RRM 1 domain. Residues 442–466 (ESNSLSNQPNNFAQTSFDYQPNHPN) are compositionally biased toward polar residues. The segment at 442–468 (ESNSLSNQPNNFAQTSFDYQPNHPNAI) is disordered. An RRM 2 domain is found at 602-679 (NTIYVGNLSN…GGIRLSYSKN (78 aa)).

The polypeptide is RNA-binding protein mde7 (mde7) (Schizosaccharomyces pombe (strain 972 / ATCC 24843) (Fission yeast)).